A 176-amino-acid polypeptide reads, in one-letter code: ATP synthase subunit delta (176 aa).

This sequence belongs to the ATPase delta chain family. F-type ATPases have 2 components, F(1) - the catalytic core - and F(0) - the membrane proton channel. F(1) has five subunits: alpha(3), beta(3), gamma(1), delta(1), epsilon(1). F(0) has three main subunits: a(1), b(2) and c(10-14). The alpha and beta chains form an alternating ring which encloses part of the gamma chain. F(1) is attached to F(0) by a central stalk formed by the gamma and epsilon chains, while a peripheral stalk is formed by the delta and b chains.

Its subcellular location is the cell inner membrane. Its function is as follows. F(1)F(0) ATP synthase produces ATP from ADP in the presence of a proton or sodium gradient. F-type ATPases consist of two structural domains, F(1) containing the extramembraneous catalytic core and F(0) containing the membrane proton channel, linked together by a central stalk and a peripheral stalk. During catalysis, ATP synthesis in the catalytic domain of F(1) is coupled via a rotary mechanism of the central stalk subunits to proton translocation. Functionally, this protein is part of the stalk that links CF(0) to CF(1). It either transmits conformational changes from CF(0) to CF(1) or is implicated in proton conduction. This chain is ATP synthase subunit delta, found in Wolinella succinogenes (strain ATCC 29543 / DSM 1740 / CCUG 13145 / JCM 31913 / LMG 7466 / NCTC 11488 / FDC 602W) (Vibrio succinogenes).